We begin with the raw amino-acid sequence, 120 residues long: uncharacterized protein (120 aa).

2 consecutive transmembrane segments (helical) span residues 8–28 and 55–75; these read PFVT…CTLV and FLEN…IGIL.

The protein localises to the membrane. This is an uncharacterized protein from Saccharomyces cerevisiae (strain ATCC 204508 / S288c) (Baker's yeast).